Here is a 238-residue protein sequence, read N- to C-terminus: Valine-rich protein (238 aa).

The signal sequence occupies residues 1 to 16 (MQAVLLVVALFGAALA).

In terms of tissue distribution, prismatic layer of shell (at protein level). Expressed primarily in the mantle with highest level in the mantle edge and lower level in the mantle pallium.

The protein localises to the secreted. This is Valine-rich protein from Pinctada maxima (Silver-lipped pearl oyster).